The primary structure comprises 380 residues: mRNA cap guanine-N(7) methyltransferase (380 aa).

Positions 24–333 (SRIFFMRNMN…MYLVFGFRKK (310 aa)) constitute an mRNA cap 0 methyltransferase domain. Residue 33 to 34 (NN) coordinates mRNA. S-adenosyl-L-methionine contacts are provided by Lys37, Ala62, Asp84, Asp117, Gln139, and Tyr144. Residues 336–380 (EAEKTEEEPATTKPVAESESEQKEVTESEEKEDQEDCEHQEAQTN) are disordered.

The protein belongs to the class I-like SAM-binding methyltransferase superfamily. mRNA cap 0 methyltransferase family.

Its subcellular location is the nucleus. The enzyme catalyses a 5'-end (5'-triphosphoguanosine)-ribonucleoside in mRNA + S-adenosyl-L-methionine = a 5'-end (N(7)-methyl 5'-triphosphoguanosine)-ribonucleoside in mRNA + S-adenosyl-L-homocysteine. Functionally, mRNA-capping methyltransferase that methylates the N7 position of the added guanosine to the 5'-cap structure of mRNAs. Binds RNA containing 5'-terminal GpppC. The polypeptide is mRNA cap guanine-N(7) methyltransferase (tag-72) (Caenorhabditis elegans).